The sequence spans 285 residues: Probable endonuclease 4 (285 aa).

Zn(2+)-binding residues include His69, His109, Glu145, Asp179, His182, His216, Asp229, His231, and Glu261.

Belongs to the AP endonuclease 2 family. Requires Zn(2+) as cofactor.

It catalyses the reaction Endonucleolytic cleavage to 5'-phosphooligonucleotide end-products.. Its function is as follows. Endonuclease IV plays a role in DNA repair. It cleaves phosphodiester bonds at apurinic or apyrimidinic (AP) sites, generating a 3'-hydroxyl group and a 5'-terminal sugar phosphate. The sequence is that of Probable endonuclease 4 from Shigella boydii serotype 18 (strain CDC 3083-94 / BS512).